A 532-amino-acid polypeptide reads, in one-letter code: Phosphoribosylamine--glycine ligase, chloroplastic (532 aa).

The N-terminal 75 residues, 1-75 (MSSLCASNCY…IQRRLFLLRC (75 aa)), are a transit peptide targeting the chloroplast. The region spanning 204-412 (KNLCHKYNIP…LAKVLLAACK (209 aa)) is the ATP-grasp domain.

It belongs to the GARS family.

It is found in the plastid. Its subcellular location is the chloroplast. The catalysed reaction is 5-phospho-beta-D-ribosylamine + glycine + ATP = N(1)-(5-phospho-beta-D-ribosyl)glycinamide + ADP + phosphate + H(+). The protein operates within purine metabolism; IMP biosynthesis via de novo pathway; N(1)-(5-phospho-D-ribosyl)glycinamide from 5-phospho-alpha-D-ribose 1-diphosphate: step 2/2. The chain is Phosphoribosylamine--glycine ligase, chloroplastic (PUR2) from Arabidopsis thaliana (Mouse-ear cress).